The chain runs to 48 residues: Large ribosomal subunit protein bL33B (48 aa).

The protein belongs to the bacterial ribosomal protein bL33 family.

In Mycoplasma pneumoniae (strain ATCC 29342 / M129 / Subtype 1) (Mycoplasmoides pneumoniae), this protein is Large ribosomal subunit protein bL33B (rpmG2).